Reading from the N-terminus, the 355-residue chain is Uroporphyrinogen decarboxylase (355 aa).

Residues 36-40 (RQAGR), Asp-85, Tyr-160, Ser-215, and His-334 each bind substrate.

This sequence belongs to the uroporphyrinogen decarboxylase family. Homodimer.

The protein localises to the cytoplasm. The catalysed reaction is uroporphyrinogen III + 4 H(+) = coproporphyrinogen III + 4 CO2. It functions in the pathway porphyrin-containing compound metabolism; protoporphyrin-IX biosynthesis; coproporphyrinogen-III from 5-aminolevulinate: step 4/4. In terms of biological role, catalyzes the decarboxylation of four acetate groups of uroporphyrinogen-III to yield coproporphyrinogen-III. This Rhodococcus erythropolis (strain PR4 / NBRC 100887) protein is Uroporphyrinogen decarboxylase.